We begin with the raw amino-acid sequence, 157 residues long: MSRRRRAEKRQVLPDPKFGDLIVTKFMNYVMYEGKKAVAENIIYGAFDILENKRKDQGPLETFHSALDNVAPAIEVRSRRVGGATYQVPVEVRPDRRRALAIRWLVTAARKRGENTMTEKLAGELLDASNNRGTAVKKREDTHKMAEANRAFSHYRW.

This sequence belongs to the universal ribosomal protein uS7 family. Part of the 30S ribosomal subunit. Contacts proteins S9 and S11.

In terms of biological role, one of the primary rRNA binding proteins, it binds directly to 16S rRNA where it nucleates assembly of the head domain of the 30S subunit. Is located at the subunit interface close to the decoding center, probably blocks exit of the E-site tRNA. This chain is Small ribosomal subunit protein uS7, found in Caulobacter sp. (strain K31).